Consider the following 283-residue polypeptide: Putative transcription factor kapC (283 aa).

The span at 1–10 (MQPTLAPAPH) shows a compositional bias: pro residues. Positions 1–121 (MQPTLAPAPH…NRAAQRAFRQ (121 aa)) are disordered. Over residues 26 to 42 (HDQLLAAHQHLSHPQQA) the composition is skewed to low complexity. Over residues 55–67 (QPNTTSPRDQNNI) the composition is skewed to polar residues. The bZIP domain maps to 102–165 (PLSTSKRAAQ…EYIINLQSRL (64 aa)). The interval 103-126 (LSTSKRAAQNRAAQRAFRQRKESY) is basic motif. The segment covering 108 to 118 (RAAQNRAAQRA) has biased composition (low complexity). Residues 130–161 (LEEQVKEFDNTNETMKQLQAENYQLREYIINL) form a leucine-zipper region. Positions 178–283 (NIDLNQPRND…EPGHGLPVVS (106 aa)) are disordered.

The protein belongs to the bZIP family.

The protein resides in the nucleus. Putative transcription factor. This is Putative transcription factor kapC (kapC) from Aspergillus niger (strain ATCC MYA-4892 / CBS 513.88 / FGSC A1513).